A 278-amino-acid chain; its full sequence is HTH-type transcriptional activator RhaS (278 aa).

The region spanning 174–272 is the HTH araC/xylS-type domain; that stretch reads NQLMAWLEDH…NWSPRDIRQG (99 aa). 2 DNA-binding regions (H-T-H motif) span residues 191 to 212 and 239 to 262; these read EAVA…KQHT and VTEI…RREF.

In terms of assembly, binds DNA as a dimer.

The protein localises to the cytoplasm. Activates expression of the rhaBAD and rhaT operons. This chain is HTH-type transcriptional activator RhaS, found in Salmonella paratyphi A (strain ATCC 9150 / SARB42).